A 131-amino-acid polypeptide reads, in one-letter code: Small ribosomal subunit protein uS19 (131 aa).

This sequence belongs to the universal ribosomal protein uS19 family.

Its function is as follows. Protein S19 forms a complex with S13 that binds strongly to the 16S ribosomal RNA. This is Small ribosomal subunit protein uS19 from Cenarchaeum symbiosum (strain A).